Consider the following 623-residue polypeptide: MAHVRGLQLPGCLALAALCTLVHSQHVFLAPQQALSLLQRVRRANSVFLEEVRKGNLERECVEETCSYEEAFEALESSTATDVFWAKYTACETARTPRDKLAACLEGNCAEGLGTNYRGHLNITQSGIQCQLWRSRYPHKPEINSTTHPGADLQENFCRNPDSSTTGPWCYTTDPTVRRQECSIPVCGQDQVTVAMTPRSEGSGVNLSPPSEQCVPDRGQQYQGRLAVTTHGLPCLAWASAQAKALSKHQDFNSAVQLVENFCRNPDGDEEGVWCYVAGKPGDFGYCDLNYCEEAMEEETGGGLDEDPDRAIEGRTATSEYQTFFDPRTFGSGEADCGLRPLFEKKSLEDKTERELLESYIDGRIVEGSDAEIGMSPWQVMLFRKSPQELLCGATLISDRWVLTAAHCLLYPPWDKNFTENDLLVRIGKHSRTRYERNIEKISMLEKIYIHPRYNWRENLDRDIALMKLKKPVAFSDYIHPVCLPDRETAASLLQAGYKGRVTGWGNLKETWTANVGKVQPSVLQVVNLPIVERPVCKDSTRIRITDNMFCAGYKPDEGKRGDACEGDSGGPFVMKSPFNNCWYQMGIVSWGEGCDRDGKYGFYTHVFRLKKWIQKVIDQFGE.

The first 24 residues, 1–24, serve as a signal peptide directing secretion; it reads MAHVRGLQLPGCLALAALCTLVHS. Positions 25–43 are excised as a propeptide; the sequence is QHVFLAPQQALSLLQRVRR. Residues 44 to 90 enclose the Gla domain; the sequence is ANSVFLEEVRKGNLERECVEETCSYEEAFEALESSTATDVFWAKYTA. Residues glutamate 50, glutamate 51, glutamate 58, glutamate 60, glutamate 63, glutamate 64, glutamate 69, glutamate 70, glutamate 73, and glutamate 76 each carry the 4-carboxyglutamate modification. Residues cysteine 61 and cysteine 66 are joined by a disulfide bond. Intrachain disulfides connect cysteine 91–cysteine 104, cysteine 109–cysteine 187, cysteine 130–cysteine 170, cysteine 158–cysteine 182, cysteine 214–cysteine 292, cysteine 235–cysteine 275, cysteine 263–cysteine 287, cysteine 337–cysteine 483, cysteine 392–cysteine 408, cysteine 537–cysteine 551, and cysteine 565–cysteine 595. Kringle domains lie at 108–187 and 213–292; these read NCAE…IPVC and QCVP…LNYC. Residues asparagine 122 and asparagine 144 are each glycosylated (N-linked (GlcNAc...) asparagine). A Peptidase S1 domain is found at 365 to 619; that stretch reads IVEGSDAEIG…LKKWIQKVID (255 aa). Histidine 407 acts as the Charge relay system in catalysis. N-linked (GlcNAc...) asparagine glycosylation is present at asparagine 417. Residue aspartate 463 is the Charge relay system of the active site. The interval 552-574 is high affinity receptor-binding region which also known as the TP508 peptide; that stretch reads AGYKPDEGKRGDACEGDSGGPFV. Residue serine 569 is the Charge relay system of the active site.

The protein belongs to the peptidase S1 family. Heterodimer (named alpha-thrombin) of a light and a heavy chain; disulfide-linked. Forms a heterodimer with SERPINA5. In plasma, interacts (via N-terminus) with alpha-1-microglobulin; this interaction does not prevent the activation of prothrombin to thrombin. Post-translationally, the gamma-carboxyglutamyl residues, which bind calcium ions, result from the carboxylation of glutamyl residues by a microsomal enzyme, the vitamin K-dependent carboxylase. The modified residues are necessary for the calcium-dependent interaction with a negatively charged phospholipid surface, which is essential for the conversion of prothrombin to thrombin. In the penultimate step of the coagulation cascade, prothrombin is converted to thrombin by the prothrombinase complex composed of factor Xa (F10), cofactor Va (F5), and phospholipids. This activation requires factor Xa-catalyzed sequential cleavage at 2 sites, Arg-315 and Arg-364, along 2 possible pathways. In the first pathway, the first cleavage occurs at Arg-315, leading to the formation of the inactive intermediate prethrombin-2. This pathway preferentially occurs on platelets and in the absence of cofactor Va. In the second pathway, the first cleavage occurs at Arg-364, which separates protease domain into 2 chains that remain connected through a disulfide bond and generates the active intermediate meizothrombin. The presence of cofactor Va directs activation along the meizothrombin pathway and greatly accelerates the rate of cleavage at Arg-364, but has a smaller effect on the cleavage of meizothrombin at Arg-315. Meizothrombin accumulates as an intermediate when prothrombinase is assembled on the membrane of red blood cells.

The enzyme catalyses Selective cleavage of Arg-|-Gly bonds in fibrinogen to form fibrin and release fibrinopeptides A and B.. Activity is promoted in the presence of negatively charged surfaces, such as polyphosphate and dextran sulfate. Inhibited by SERPINA5. In terms of biological role, thrombin, which cleaves bonds after Arg and Lys, converts fibrinogen to fibrin and activates factors V, VII, VIII, XIII, and, in complex with thrombomodulin, protein C. Functions in blood homeostasis, inflammation and wound healing. Activates coagulation factor XI (F11); activation is promoted by the contact with negatively charged surfaces. Triggers the production of pro-inflammatory cytokines, such as MCP-1/CCL2 and IL8/CXCL8, in endothelial cells. This Pongo abelii (Sumatran orangutan) protein is Prothrombin (F2).